The following is a 327-amino-acid chain: Phenylalanine--tRNA ligase alpha subunit (327 aa).

Residue glutamate 252 coordinates Mg(2+).

The protein belongs to the class-II aminoacyl-tRNA synthetase family. Phe-tRNA synthetase alpha subunit type 1 subfamily. In terms of assembly, tetramer of two alpha and two beta subunits. Requires Mg(2+) as cofactor.

It is found in the cytoplasm. The catalysed reaction is tRNA(Phe) + L-phenylalanine + ATP = L-phenylalanyl-tRNA(Phe) + AMP + diphosphate + H(+). This is Phenylalanine--tRNA ligase alpha subunit from Yersinia pestis bv. Antiqua (strain Antiqua).